The chain runs to 602 residues: Elongation factor 4 (602 aa).

Residues 8–190 (DLIRNFSIVA…AIVHRLPPPK (183 aa)) enclose the tr-type G domain. Residues 20 to 25 (DHGKST) and 137 to 140 (NKID) each bind GTP.

Belongs to the TRAFAC class translation factor GTPase superfamily. Classic translation factor GTPase family. LepA subfamily.

It is found in the cell inner membrane. It carries out the reaction GTP + H2O = GDP + phosphate + H(+). Functionally, required for accurate and efficient protein synthesis under certain stress conditions. May act as a fidelity factor of the translation reaction, by catalyzing a one-codon backward translocation of tRNAs on improperly translocated ribosomes. Back-translocation proceeds from a post-translocation (POST) complex to a pre-translocation (PRE) complex, thus giving elongation factor G a second chance to translocate the tRNAs correctly. Binds to ribosomes in a GTP-dependent manner. The sequence is that of Elongation factor 4 from Cereibacter sphaeroides (strain ATCC 17029 / ATH 2.4.9) (Rhodobacter sphaeroides).